The chain runs to 309 residues: Mitochondrial import receptor subunit TOM34 (309 aa).

TPR repeat units lie at residues 9-42 (VEELRAAGNESFRNGQYAEASALYGRALRVLQAQ), 51-84 (SVLYSNRAACHLKDGNCRDCIKDCTSALALVPFS), and 86-118 (KPLLRRASAYEALEKYPMAYVDYKTVLQIDDSV). The residue at position 160 (Ser160) is a Phosphoserine. The tract at residues 161 to 189 (LPSENHKEMAKSKSKETTATKNRVPSAGD) is disordered. Residues 164 to 178 (ENHKEMAKSKSKETT) show a composition bias toward basic and acidic residues. Ser186 bears the Phosphoserine mark. 3 TPR repeats span residues 193-226 (AKVLKEEGNELVKKGNHKKAIEKYSESLLCSNLE), 227-260 (SATYSNRALCYLVLKQYTEAVKDCTEALKLDGKN), and 262-294 (KAFYRRAQAHKALKDYKSSFADISNLLQIEPRN). Lys197 participates in a covalent cross-link: Glycyl lysine isopeptide (Lys-Gly) (interchain with G-Cter in SUMO2).

It belongs to the Tom34 family. As to quaternary structure, interacts with HSP90A, VCP, ATP6V1D, KIAA0665, AMPK, and DMAP1 through its TPR repeat.

It localises to the cytoplasm. It is found in the mitochondrion outer membrane. In terms of biological role, plays a role in the import of cytosolically synthesized preproteins into mitochondria. Binds the mature portion of precursor proteins. Interacts with cellular components, and possesses weak ATPase activity. May be a chaperone-like protein that helps to keep newly synthesized precursors in an unfolded import compatible state. This Pongo abelii (Sumatran orangutan) protein is Mitochondrial import receptor subunit TOM34 (TOMM34).